The sequence spans 214 residues: Pyridoxine/pyridoxamine 5'-phosphate oxidase (214 aa).

Residues 9 to 12 and Lys67 each bind substrate; that span reads RKNY. Residues 62–67, 77–78, Lys84, and Gln106 contribute to the FMN site; these read RMVLLK and YT. Residues Tyr124, Arg128, and Ser132 each contribute to the substrate site. Residues 141-142 and Trp186 contribute to the FMN site; that span reads QS. 192 to 194 is a binding site for substrate; it reads RLH. Residue Arg196 participates in FMN binding.

The protein belongs to the pyridoxamine 5'-phosphate oxidase family. As to quaternary structure, homodimer. Requires FMN as cofactor.

The enzyme catalyses pyridoxamine 5'-phosphate + O2 + H2O = pyridoxal 5'-phosphate + H2O2 + NH4(+). It catalyses the reaction pyridoxine 5'-phosphate + O2 = pyridoxal 5'-phosphate + H2O2. The protein operates within cofactor metabolism; pyridoxal 5'-phosphate salvage; pyridoxal 5'-phosphate from pyridoxamine 5'-phosphate: step 1/1. It participates in cofactor metabolism; pyridoxal 5'-phosphate salvage; pyridoxal 5'-phosphate from pyridoxine 5'-phosphate: step 1/1. In terms of biological role, catalyzes the oxidation of either pyridoxine 5'-phosphate (PNP) or pyridoxamine 5'-phosphate (PMP) into pyridoxal 5'-phosphate (PLP). The polypeptide is Pyridoxine/pyridoxamine 5'-phosphate oxidase (Gloeothece citriformis (strain PCC 7424) (Cyanothece sp. (strain PCC 7424))).